A 715-amino-acid polypeptide reads, in one-letter code: Fatty acid oxidation complex subunit alpha (715 aa).

Residues 1-190 (MIYEGKAITV…KVGAVDAVVA (190 aa)) form an enoyl-CoA hydratase/isomerase region. Position 297 (Asp-297) interacts with substrate. Residues 312–715 (KDVKQAAVLG…MAKNGQSFFG (404 aa)) are 3-hydroxyacyl-CoA dehydrogenase. NAD(+) contacts are provided by residues Met-325, Asp-344, 401 to 403 (VVE), Lys-408, and Ser-430. His-451 acts as the For 3-hydroxyacyl-CoA dehydrogenase activity in catalysis. NAD(+) is bound at residue Asn-454. Substrate-binding residues include Asn-501 and Tyr-660.

This sequence in the N-terminal section; belongs to the enoyl-CoA hydratase/isomerase family. The protein in the C-terminal section; belongs to the 3-hydroxyacyl-CoA dehydrogenase family. Heterotetramer of two alpha chains (FadB) and two beta chains (FadA).

The catalysed reaction is a (3S)-3-hydroxyacyl-CoA + NAD(+) = a 3-oxoacyl-CoA + NADH + H(+). The enzyme catalyses a (3S)-3-hydroxyacyl-CoA = a (2E)-enoyl-CoA + H2O. It carries out the reaction a 4-saturated-(3S)-3-hydroxyacyl-CoA = a (3E)-enoyl-CoA + H2O. It catalyses the reaction (3S)-3-hydroxybutanoyl-CoA = (3R)-3-hydroxybutanoyl-CoA. The catalysed reaction is a (3Z)-enoyl-CoA = a 4-saturated (2E)-enoyl-CoA. The enzyme catalyses a (3E)-enoyl-CoA = a 4-saturated (2E)-enoyl-CoA. It participates in lipid metabolism; fatty acid beta-oxidation. Its function is as follows. Involved in the aerobic and anaerobic degradation of long-chain fatty acids via beta-oxidation cycle. Catalyzes the formation of 3-oxoacyl-CoA from enoyl-CoA via L-3-hydroxyacyl-CoA. It can also use D-3-hydroxyacyl-CoA and cis-3-enoyl-CoA as substrate. The chain is Fatty acid oxidation complex subunit alpha from Pseudomonas fluorescens (strain Pf0-1).